The following is a 34-amino-acid chain: Protein HRURF (34 aa).

May function as an inhibitory translational control element that can negatively regulate protein translation of HR gene. This Homo sapiens (Human) protein is Protein HRURF.